A 496-amino-acid polypeptide reads, in one-letter code: Cytochrome P450 71B1 (496 aa).

Cys-436 provides a ligand contact to heme.

Belongs to the cytochrome P450 family. The cofactor is heme.

The polypeptide is Cytochrome P450 71B1 (CYP71B1) (Thlaspi arvense (Field penny-cress)).